A 788-amino-acid chain; its full sequence is uncharacterized protein (788 aa).

The Adrift-type SAM-dependent 2'-O-MTase domain maps to 485–693 (EMITTAWIKL…IYIVLKSYKG (209 aa)). The S-adenosyl-L-methionine site is built by Gly521 and Asp604. Lys645 functions as the Proton acceptor in the catalytic mechanism.

This is an uncharacterized protein from Acanthamoeba polyphaga (Amoeba).